We begin with the raw amino-acid sequence, 219 residues long: Transcriptional regulator AcuR (219 aa).

The tract at residues 1–25 (MPLTDTPPSVPQKPRRGRPRGAPDA) is disordered. The 61-residue stretch at 26 to 86 (SLAHQSLIRA…ALIEAYDTYF (61 aa)) folds into the HTH tetR-type domain. The H-T-H motif DNA-binding region spans 49 to 68 (GVDEILKAARVPKGSFYHYF).

Functionally, a transcriptional repressor for its operon. Probably binds to 2 operator sequences in the promoter. The polypeptide is Transcriptional regulator AcuR (acuR) (Cereibacter sphaeroides (strain ATCC 17023 / DSM 158 / JCM 6121 / CCUG 31486 / LMG 2827 / NBRC 12203 / NCIMB 8253 / ATH 2.4.1.) (Rhodobacter sphaeroides)).